The primary structure comprises 739 residues: tRNA 5-methylaminomethyl-2-thiouridine biosynthesis bifunctional protein MnmC (739 aa).

The interval 1–282 (MDKVTPAKLS…KREMLTATKL (282 aa)) is tRNA (mnm(5)s(2)U34)-methyltransferase. The segment at 330–739 (IGAGVCGLMA…HRSSLKKPLS (410 aa)) is FAD-dependent cmnm(5)s(2)U34 oxidoreductase.

In the N-terminal section; belongs to the methyltransferase superfamily. tRNA (mnm(5)s(2)U34)-methyltransferase family. This sequence in the C-terminal section; belongs to the DAO family. FAD serves as cofactor.

It localises to the cytoplasm. The enzyme catalyses 5-aminomethyl-2-thiouridine(34) in tRNA + S-adenosyl-L-methionine = 5-methylaminomethyl-2-thiouridine(34) in tRNA + S-adenosyl-L-homocysteine + H(+). Catalyzes the last two steps in the biosynthesis of 5-methylaminomethyl-2-thiouridine (mnm(5)s(2)U) at the wobble position (U34) in tRNA. Catalyzes the FAD-dependent demodification of cmnm(5)s(2)U34 to nm(5)s(2)U34, followed by the transfer of a methyl group from S-adenosyl-L-methionine to nm(5)s(2)U34, to form mnm(5)s(2)U34. The chain is tRNA 5-methylaminomethyl-2-thiouridine biosynthesis bifunctional protein MnmC from Psychrobacter sp. (strain PRwf-1).